Consider the following 77-residue polypeptide: UPF0349 protein lmo2392 (77 aa).

Belongs to the UPF0349 family.

The chain is UPF0349 protein lmo2392 from Listeria monocytogenes serovar 1/2a (strain ATCC BAA-679 / EGD-e).